The chain runs to 247 residues: Phosphonates import ATP-binding protein PhnC (247 aa).

In terms of domain architecture, ABC transporter spans 5–246 (IEVKNLVKNY…EDDIRKVYQT (242 aa)). 37–44 (GESGAGKS) is a binding site for ATP.

This sequence belongs to the ABC transporter superfamily. Phosphonates importer (TC 3.A.1.9.1) family. In terms of assembly, the complex is composed of two ATP-binding proteins (PhnC), two transmembrane proteins (PhnE) and a solute-binding protein (PhnD).

The protein localises to the cell inner membrane. It carries out the reaction phosphonate(out) + ATP + H2O = phosphonate(in) + ADP + phosphate + H(+). Functionally, part of the ABC transporter complex PhnCDE involved in phosphonates import. Responsible for energy coupling to the transport system. In Fusobacterium nucleatum subsp. nucleatum (strain ATCC 25586 / DSM 15643 / BCRC 10681 / CIP 101130 / JCM 8532 / KCTC 2640 / LMG 13131 / VPI 4355), this protein is Phosphonates import ATP-binding protein PhnC.